The chain runs to 264 residues: ATP synthase subunit a (264 aa).

Transmembrane regions (helical) follow at residues 27 to 47, 87 to 107, 131 to 151, 172 to 192, 196 to 216, and 230 to 250; these read VHLDTLLFSIISGAIFLFVFS, VGPLALTIFCWVFIMNAIDLI, DISGTLGLSIGVFFLIIFYTI, LLIPVNLALESVTLLAKPVSL, LFGNMYAGELIFILIAVMYMA, and LAWAIFHILVITLQAFIFMML.

The protein belongs to the ATPase A chain family. F-type ATPases have 2 components, CF(1) - the catalytic core - and CF(0) - the membrane proton channel. CF(1) has five subunits: alpha(3), beta(3), gamma(1), delta(1), epsilon(1). CF(0) has three main subunits: a(1), b(2) and c(9-12). The alpha and beta chains form an alternating ring which encloses part of the gamma chain. CF(1) is attached to CF(0) by a central stalk formed by the gamma and epsilon chains, while a peripheral stalk is formed by the delta and b chains.

It is found in the cell inner membrane. Its function is as follows. Key component of the proton channel; it plays a direct role in the translocation of protons across the membrane. The chain is ATP synthase subunit a from Pasteurella multocida (strain Pm70).